We begin with the raw amino-acid sequence, 80 residues long: MIKNEQPPLSFEEAMEQLEEVVEQLEQGDVPLEEAISMFQKGMNLSKVCHEKLATVEKQMDQILKEDGNFEETVLQEEQE.

This sequence belongs to the XseB family. In terms of assembly, heterooligomer composed of large and small subunits.

It is found in the cytoplasm. It carries out the reaction Exonucleolytic cleavage in either 5'- to 3'- or 3'- to 5'-direction to yield nucleoside 5'-phosphates.. Bidirectionally degrades single-stranded DNA into large acid-insoluble oligonucleotides, which are then degraded further into small acid-soluble oligonucleotides. This Halalkalibacterium halodurans (strain ATCC BAA-125 / DSM 18197 / FERM 7344 / JCM 9153 / C-125) (Bacillus halodurans) protein is Exodeoxyribonuclease 7 small subunit.